Consider the following 124-residue polypeptide: Small ribosomal subunit protein uS12 (124 aa).

The segment at 1–29 is disordered; sequence MATINQLVRKGRKRRVAKSNVPALEASPQ. Aspartate 89 carries the post-translational modification 3-methylthioaspartic acid. The segment at 101-124 is disordered; sequence AADTAGVDKRRQGRSKYGAKRPKS. Residues 111–124 show a composition bias toward basic residues; sequence RQGRSKYGAKRPKS.

The protein belongs to the universal ribosomal protein uS12 family. In terms of assembly, part of the 30S ribosomal subunit. Contacts proteins S8 and S17. May interact with IF1 in the 30S initiation complex.

Its function is as follows. With S4 and S5 plays an important role in translational accuracy. In terms of biological role, interacts with and stabilizes bases of the 16S rRNA that are involved in tRNA selection in the A site and with the mRNA backbone. Located at the interface of the 30S and 50S subunits, it traverses the body of the 30S subunit contacting proteins on the other side and probably holding the rRNA structure together. The combined cluster of proteins S8, S12 and S17 appears to hold together the shoulder and platform of the 30S subunit. In Alkalilimnicola ehrlichii (strain ATCC BAA-1101 / DSM 17681 / MLHE-1), this protein is Small ribosomal subunit protein uS12.